An 87-amino-acid polypeptide reads, in one-letter code: Small ribosomal subunit protein bS20 (87 aa).

The tract at residues 1-27 is disordered; the sequence is MANIKSAKKRALQSEKRRQHNASRRSM.

It belongs to the bacterial ribosomal protein bS20 family.

In terms of biological role, binds directly to 16S ribosomal RNA. The chain is Small ribosomal subunit protein bS20 from Aeromonas hydrophila subsp. hydrophila (strain ATCC 7966 / DSM 30187 / BCRC 13018 / CCUG 14551 / JCM 1027 / KCTC 2358 / NCIMB 9240 / NCTC 8049).